Reading from the N-terminus, the 249-residue chain is Diphthine synthase (249 aa).

S-adenosyl-L-methionine-binding positions include Asp-83, Leu-86, 111 to 112, Leu-163, and Leu-205; that span reads SI.

It belongs to the diphthine synthase family. As to quaternary structure, homodimer.

The catalysed reaction is 2-[(3S)-amino-3-carboxypropyl]-L-histidyl-[translation elongation factor 2] + 3 S-adenosyl-L-methionine = diphthine-[translation elongation factor 2] + 3 S-adenosyl-L-homocysteine + 3 H(+). It participates in protein modification; peptidyl-diphthamide biosynthesis. Functionally, S-adenosyl-L-methionine-dependent methyltransferase that catalyzes the trimethylation of the amino group of the modified target histidine residue in translation elongation factor 2 (EF-2), to form an intermediate called diphthine. The three successive methylation reactions represent the second step of diphthamide biosynthesis. The chain is Diphthine synthase from Pyrobaculum islandicum (strain DSM 4184 / JCM 9189 / GEO3).